A 218-amino-acid chain; its full sequence is Transmembrane gamma-carboxyglutamic acid protein 1 (218 aa).

The propeptide occupies 1-20; sequence MGRVFLTGEKANSVLKRYPR. The region spanning 20–66 is the Gla domain; the sequence is RANGFFEEIRQGNIERECKEEFCTFEEAREAFENNEKTKEFWSTYTK. Residues 21 to 80 lie on the Extracellular side of the membrane; it reads ANGFFEEIRQGNIERECKEEFCTFEEAREAFENNEKTKEFWSTYTKAQQGESNRGSDWFQ. Cys-37 and Cys-42 are joined by a disulfide. A helical transmembrane segment spans residues 81 to 101; that stretch reads FYLTFPLIFGLFIILLVIFLI. Residues 102 to 218 lie on the Cytoplasmic side of the membrane; that stretch reads WRCFLRNKTR…PMVPVVTTIK (117 aa). Residues 161-195 form a disordered region; sequence TRLSNCDPPPTYEEATGQVNLQRSETEPHLDPPPE.

Post-translationally, gla residues are produced after subsequent post-translational modifications of glutamate by a vitamin K-dependent gamma-carboxylase.

It is found in the membrane. This Pongo abelii (Sumatran orangutan) protein is Transmembrane gamma-carboxyglutamic acid protein 1 (PRRG1).